The following is a 926-amino-acid chain: Piwi-like protein Ago3 (926 aa).

The segment at 1-62 (MADPGKGRGR…PSTSGVSIGG (62 aa)) is disordered. Residues 26–56 (SPSQSESQSPESTPEQSTAPSTIASATPSTS) show a composition bias toward low complexity. The region spanning 339–455 (TVLSLIKEVV…LIPELCQLTG (117 aa)) is the PAZ domain. The 293-residue stretch at 620 to 912 (LVVAICSTKR…LSYLVGQCVH (293 aa)) folds into the Piwi domain. Mg(2+) is bound at residue Gln672. Active-site residues include Asp697, Glu735, Asp767, and His901. Leu926 contributes to the Mg(2+) binding site.

It belongs to the argonaute family. Piwi subfamily. Interacts (when symmetrically methylated) with Papi/TDRKH. Interacts with Vasa. Mg(2+) serves as cofactor. Post-translationally, arginine methylation is required for the interaction with Tudor domain-containing protein Papi/TDRKH. Highly expressed in the larval testis, pupal ovary and adult eggs.

It is found in the cytoplasm. Its function is as follows. Endoribonuclease that plays a central role during spermatogenesis by repressing transposable elements and preventing their mobilization, which is essential for the germline integrity. Plays an essential role in meiotic differentiation of spermatocytes, germ cell differentiation and in self-renewal of spermatogonial stem cells. Its presence in oocytes suggests that it may participate in similar functions during oogenesis in females. Acts via the piRNA metabolic process, which mediates the repression of transposable elements during meiosis by forming complexes composed of piRNAs and Piwi proteins and govern the methylation and subsequent repression of transposons. Directly binds piRNAs, a class of 24 to 30 nucleotide RNAs that are generated by a Dicer-independent mechanism and are primarily derived from transposons and other repeated sequence elements. Strongly prefers a have adenine at position 10 of their guide (g10A preference). Plays a key role in the piRNA amplification loop, also named ping-pong amplification cycle: antisense piRNA-bound Siwi and sense piRNA-bound Ago3 reciprocally cleave complementary transcripts, to couple the amplification of piRNAs with the repression of transposable elements. The polypeptide is Piwi-like protein Ago3 (AGO3) (Bombyx mori (Silk moth)).